Here is a 309-residue protein sequence, read N- to C-terminus: Formimidoylglutamase (309 aa).

His-120, Asp-145, His-147, Asp-149, Asp-236, and Asp-238 together coordinate Mn(2+).

Belongs to the arginase family. Mn(2+) is required as a cofactor.

It catalyses the reaction N-formimidoyl-L-glutamate + H2O = formamide + L-glutamate. It functions in the pathway amino-acid degradation; L-histidine degradation into L-glutamate; L-glutamate from N-formimidoyl-L-glutamate (hydrolase route): step 1/1. Catalyzes the conversion of N-formimidoyl-L-glutamate to L-glutamate and formamide. The sequence is that of Formimidoylglutamase from Chromobacterium violaceum (strain ATCC 12472 / DSM 30191 / JCM 1249 / CCUG 213 / NBRC 12614 / NCIMB 9131 / NCTC 9757 / MK).